The following is a 407-amino-acid chain: MKYDHLLVRYGELTLKGSNRKKFVNQLRNNVNKSLKGLDGFVVKGKRDRMYIELEDHADINEITYRLSKIFGIKSISPVLKVEKTIEAMSAAAIKFAQQFEENSTFKIDVKRADKNFPMDTYELQRELGGTVLKQIENVSVNVKRPDHEIRVEVRLDAIYMYEEVVPGSGGLPVGTGGKTLLMLSGGIDSPVAGMEVMRRGVTIEAIHFHSPPFTSDQAKEKVIELTRILAERVGPIKLHIVPFTELQKRVNKVVHPRYTMTSTRRMMMRVADKLVHQIGALAIVNGENLGQVASQTLHSMYAINNVTSTPVLRPLLTYDKEEIIIKSKEIGTFETSIQPFEDCCTIFTPKNPVTEPNFEKVVQYESVFDFEEMINRAVENIETLEITSDYKTIKEQQTNQLINDFL.

The THUMP domain maps to 61-165 (NEITYRLSKI…LDAIYMYEEV (105 aa)). ATP contacts are provided by residues 183–184 (ML), 208–209 (HF), Arg265, Gly287, and Gln296.

It belongs to the ThiI family.

It is found in the cytoplasm. It catalyses the reaction [ThiI sulfur-carrier protein]-S-sulfanyl-L-cysteine + a uridine in tRNA + 2 reduced [2Fe-2S]-[ferredoxin] + ATP + H(+) = [ThiI sulfur-carrier protein]-L-cysteine + a 4-thiouridine in tRNA + 2 oxidized [2Fe-2S]-[ferredoxin] + AMP + diphosphate. The enzyme catalyses [ThiS sulfur-carrier protein]-C-terminal Gly-Gly-AMP + S-sulfanyl-L-cysteinyl-[cysteine desulfurase] + AH2 = [ThiS sulfur-carrier protein]-C-terminal-Gly-aminoethanethioate + L-cysteinyl-[cysteine desulfurase] + A + AMP + 2 H(+). It functions in the pathway cofactor biosynthesis; thiamine diphosphate biosynthesis. Functionally, catalyzes the ATP-dependent transfer of a sulfur to tRNA to produce 4-thiouridine in position 8 of tRNAs, which functions as a near-UV photosensor. Also catalyzes the transfer of sulfur to the sulfur carrier protein ThiS, forming ThiS-thiocarboxylate. This is a step in the synthesis of thiazole, in the thiamine biosynthesis pathway. The sulfur is donated as persulfide by IscS. The polypeptide is Probable tRNA sulfurtransferase (Staphylococcus aureus (strain JH1)).